We begin with the raw amino-acid sequence, 317 residues long: ADP-L-glycero-D-manno-heptose-6-epimerase (317 aa).

NADP(+) contacts are provided by residues 10–11 (FI), 31–32 (DD), Lys-38, Lys-53, 75–79 (QGACS), and Asn-92. Tyr-139 functions as the Proton acceptor in the catalytic mechanism. Lys-143 contacts NADP(+). Asn-166 is a binding site for substrate. Residues Val-167 and Lys-175 each coordinate NADP(+). Lys-175 serves as the catalytic Proton acceptor. Residues Gly-177, His-184, 198–201 (FQGH), Arg-211, and Tyr-275 contribute to the substrate site.

The protein belongs to the NAD(P)-dependent epimerase/dehydratase family. HldD subfamily. Homopentamer. The cofactor is NADP(+).

It catalyses the reaction ADP-D-glycero-beta-D-manno-heptose = ADP-L-glycero-beta-D-manno-heptose. It functions in the pathway nucleotide-sugar biosynthesis; ADP-L-glycero-beta-D-manno-heptose biosynthesis; ADP-L-glycero-beta-D-manno-heptose from D-glycero-beta-D-manno-heptose 7-phosphate: step 4/4. In terms of biological role, catalyzes the interconversion between ADP-D-glycero-beta-D-manno-heptose and ADP-L-glycero-beta-D-manno-heptose via an epimerization at carbon 6 of the heptose. The sequence is that of ADP-L-glycero-D-manno-heptose-6-epimerase from Shewanella loihica (strain ATCC BAA-1088 / PV-4).